We begin with the raw amino-acid sequence, 184 residues long: Dirigent protein 13 (184 aa).

A signal peptide spans 1-25 (MANQIYIISLIFLSVLLYQSTTVLS). A disulfide bridge connects residues cysteine 36 and cysteine 182. Asparagine 55 and asparagine 119 each carry an N-linked (GlcNAc...) asparagine glycan.

This sequence belongs to the plant dirigent protein family. Homodimer. Expressed in root vasculature and meristems, cotyledons, flowers, siliques, and leaf trichomes. Localized in the interfascicular/vascular cambia and developing xylem.

Its subcellular location is the secreted. The protein localises to the extracellular space. It localises to the apoplast. Its function is as follows. Dirigent proteins impart stereoselectivity on the phenoxy radical-coupling reaction, yielding optically active lignans from two molecules of coniferyl alcohol in the biosynthesis of lignans, flavonolignans, and alkaloids and thus plays a central role in plant secondary metabolism. In Arabidopsis thaliana (Mouse-ear cress), this protein is Dirigent protein 13 (DIR13).